The following is a 193-amino-acid chain: Crossover junction endodeoxyribonuclease RuvC (193 aa).

Catalysis depends on residues aspartate 7, glutamate 68, and aspartate 141. Mg(2+) contacts are provided by aspartate 7, glutamate 68, and aspartate 141.

It belongs to the RuvC family. As to quaternary structure, homodimer which binds Holliday junction (HJ) DNA. The HJ becomes 2-fold symmetrical on binding to RuvC with unstacked arms; it has a different conformation from HJ DNA in complex with RuvA. In the full resolvosome a probable DNA-RuvA(4)-RuvB(12)-RuvC(2) complex forms which resolves the HJ. It depends on Mg(2+) as a cofactor.

It is found in the cytoplasm. The catalysed reaction is Endonucleolytic cleavage at a junction such as a reciprocal single-stranded crossover between two homologous DNA duplexes (Holliday junction).. Functionally, the RuvA-RuvB-RuvC complex processes Holliday junction (HJ) DNA during genetic recombination and DNA repair. Endonuclease that resolves HJ intermediates. Cleaves cruciform DNA by making single-stranded nicks across the HJ at symmetrical positions within the homologous arms, yielding a 5'-phosphate and a 3'-hydroxyl group; requires a central core of homology in the junction. The consensus cleavage sequence is 5'-(A/T)TT(C/G)-3'. Cleavage occurs on the 3'-side of the TT dinucleotide at the point of strand exchange. HJ branch migration catalyzed by RuvA-RuvB allows RuvC to scan DNA until it finds its consensus sequence, where it cleaves and resolves the cruciform DNA. This is Crossover junction endodeoxyribonuclease RuvC from Bifidobacterium adolescentis (strain ATCC 15703 / DSM 20083 / NCTC 11814 / E194a).